We begin with the raw amino-acid sequence, 1309 residues long: Putative receptor-type tyrosine-protein phosphatase mosPTP-1 (1309 aa).

The first 36 residues, M1–A36, serve as a signal peptide directing secretion. At A37–A572 the chain is on the extracellular side. Residues N60, N107, N162, N257, N353, N389, N455, N501, and N513 are each glycosylated (N-linked (GlcNAc...) asparagine). 4 Fibronectin type-III domains span residues P147–E244, K249–V347, K350–S449, and A450–H553. A helical transmembrane segment spans residues V573–L593. Residues W594–S1309 are Cytoplasmic-facing. Tyrosine-protein phosphatase domains lie at F656–A921 and I944–M1196. C862 (phosphocysteine intermediate) is an active-site residue. The segment at N1239 to T1269 is disordered. A compositionally biased stretch (gly residues) spans G1256–T1268.

Belongs to the protein-tyrosine phosphatase family. Receptor class subfamily. In terms of assembly, interacts with C-type lectin mosGCTL-1; the interaction probably mediates the recruitment of West Nile virus particles in complex with C-type lectin mosGCTL-1 to the cell surface. Interacts with C-type lectin mosGCTL-7; the interaction probably mediates the recruitment of Japanese encephalitis virus particles in complex with C-type lectin mosGCTL-7 to the cell surface. As to expression, salivary gland (at protein level). Hemolymph. Low-level expression in midgut.

The protein localises to the cell membrane. It catalyses the reaction O-phospho-L-tyrosyl-[protein] + H2O = L-tyrosyl-[protein] + phosphate. In terms of biological role, putative protein tyrosine-protein phosphatase. Its function is as follows. (Microbial infection) Facilitates West Nile virus infection in mosquitoes probably via recruiting West Nile virus particles in complex with C-type lectin mosGCTL-1 to the cell surface. Functionally, (Microbial infection) Facilitates Japanese encephalitis virus infection in mosquitoes probably via recruiting Japanese encephalitis virus particles in complex with C-type lectin mosGCTL-7 to the cell surface. The sequence is that of Putative receptor-type tyrosine-protein phosphatase mosPTP-1 from Aedes aegypti (Yellowfever mosquito).